Reading from the N-terminus, the 389-residue chain is Chaperone protein DnaJ (389 aa).

One can recognise a J domain in the interval 6 to 70 (DYYEILGLSK…EKRAQYDRFG (65 aa)). The CR-type zinc finger occupies 131–213 (GVRKDIDIPR…CSGAGRVRSR (83 aa)). Positions 144, 147, 161, 164, 187, 190, 201, and 204 each coordinate Zn(2+). CXXCXGXG motif repeat units lie at residues 144-151 (CSTCSGTG), 161-168 (CPNCGGTG), 187-194 (CSACHGRG), and 201-208 (CPTCSGAG). The segment at 145 to 167 (STCSGTGAKPGTSPKRCPNCGGT) is disordered. Positions 351-389 (LSNGKKPEAEERSRSDKQKSEKPRKSKGLFEKVKDAFES) are disordered. Basic and acidic residues predominate over residues 355 to 389 (KKPEAEERSRSDKQKSEKPRKSKGLFEKVKDAFES).

Belongs to the DnaJ family. As to quaternary structure, homodimer. Zn(2+) is required as a cofactor.

Its subcellular location is the cytoplasm. Functionally, participates actively in the response to hyperosmotic and heat shock by preventing the aggregation of stress-denatured proteins and by disaggregating proteins, also in an autonomous, DnaK-independent fashion. Unfolded proteins bind initially to DnaJ; upon interaction with the DnaJ-bound protein, DnaK hydrolyzes its bound ATP, resulting in the formation of a stable complex. GrpE releases ADP from DnaK; ATP binding to DnaK triggers the release of the substrate protein, thus completing the reaction cycle. Several rounds of ATP-dependent interactions between DnaJ, DnaK and GrpE are required for fully efficient folding. Also involved, together with DnaK and GrpE, in the DNA replication of plasmids through activation of initiation proteins. The sequence is that of Chaperone protein DnaJ from Methanosarcina mazei (strain ATCC BAA-159 / DSM 3647 / Goe1 / Go1 / JCM 11833 / OCM 88) (Methanosarcina frisia).